The primary structure comprises 88 residues: Small ribosomal subunit protein bS16 (88 aa).

This sequence belongs to the bacterial ribosomal protein bS16 family.

The polypeptide is Small ribosomal subunit protein bS16 (Leptospira interrogans serogroup Icterohaemorrhagiae serovar Lai (strain 56601)).